Here is a 272-residue protein sequence, read N- to C-terminus: 3-deoxy-manno-octulosonate cytidylyltransferase (272 aa).

Belongs to the KdsB family.

Its subcellular location is the cytoplasm. The catalysed reaction is 3-deoxy-alpha-D-manno-oct-2-ulosonate + CTP = CMP-3-deoxy-beta-D-manno-octulosonate + diphosphate. Its pathway is nucleotide-sugar biosynthesis; CMP-3-deoxy-D-manno-octulosonate biosynthesis; CMP-3-deoxy-D-manno-octulosonate from 3-deoxy-D-manno-octulosonate and CTP: step 1/1. The protein operates within bacterial outer membrane biogenesis; lipopolysaccharide biosynthesis. Its function is as follows. Activates KDO (a required 8-carbon sugar) for incorporation into bacterial lipopolysaccharide in Gram-negative bacteria. This is 3-deoxy-manno-octulosonate cytidylyltransferase from Verminephrobacter eiseniae (strain EF01-2).